A 483-amino-acid polypeptide reads, in one-letter code: Glutamate--tRNA ligase (483 aa).

Positions 14-24 (PSPTGDPHVGT) match the 'HIGH' region motif. The 'KMSKS' region motif lies at 253–257 (KISKR). Lys256 is a binding site for ATP.

It belongs to the class-I aminoacyl-tRNA synthetase family. Glutamate--tRNA ligase type 1 subfamily. As to quaternary structure, monomer.

The protein localises to the cytoplasm. It carries out the reaction tRNA(Glu) + L-glutamate + ATP = L-glutamyl-tRNA(Glu) + AMP + diphosphate. Its function is as follows. Catalyzes the attachment of glutamate to tRNA(Glu) in a two-step reaction: glutamate is first activated by ATP to form Glu-AMP and then transferred to the acceptor end of tRNA(Glu). The chain is Glutamate--tRNA ligase from Deinococcus radiodurans (strain ATCC 13939 / DSM 20539 / JCM 16871 / CCUG 27074 / LMG 4051 / NBRC 15346 / NCIMB 9279 / VKM B-1422 / R1).